The chain runs to 91 residues: Small ribosomal subunit protein uS17 (91 aa).

The protein belongs to the universal ribosomal protein uS17 family. As to quaternary structure, part of the 30S ribosomal subunit.

Its function is as follows. One of the primary rRNA binding proteins, it binds specifically to the 5'-end of 16S ribosomal RNA. The chain is Small ribosomal subunit protein uS17 from Acidithiobacillus ferrooxidans (strain ATCC 23270 / DSM 14882 / CIP 104768 / NCIMB 8455) (Ferrobacillus ferrooxidans (strain ATCC 23270)).